The sequence spans 873 residues: Alanine--tRNA ligase (873 aa).

4 residues coordinate Zn(2+): His559, His563, Cys661, and His665.

This sequence belongs to the class-II aminoacyl-tRNA synthetase family. Zn(2+) serves as cofactor.

The protein resides in the cytoplasm. It carries out the reaction tRNA(Ala) + L-alanine + ATP = L-alanyl-tRNA(Ala) + AMP + diphosphate. Its function is as follows. Catalyzes the attachment of alanine to tRNA(Ala) in a two-step reaction: alanine is first activated by ATP to form Ala-AMP and then transferred to the acceptor end of tRNA(Ala). Also edits incorrectly charged Ser-tRNA(Ala) and Gly-tRNA(Ala) via its editing domain. The chain is Alanine--tRNA ligase from Acaryochloris marina (strain MBIC 11017).